We begin with the raw amino-acid sequence, 432 residues long: D-amino acid dehydrogenase (432 aa).

3–17 (VLVLGGGVIGVTSAY) is a binding site for FAD.

Belongs to the DadA oxidoreductase family. FAD serves as cofactor.

The catalysed reaction is a D-alpha-amino acid + A + H2O = a 2-oxocarboxylate + AH2 + NH4(+). It functions in the pathway amino-acid degradation; D-alanine degradation; NH(3) and pyruvate from D-alanine: step 1/1. Oxidative deamination of D-amino acids. This chain is D-amino acid dehydrogenase, found in Delftia acidovorans (strain DSM 14801 / SPH-1).